The following is a 163-amino-acid chain: Staphylokinase (163 aa).

The N-terminal stretch at 1-27 (MLKRSLLFLTVLLLLFSFSSITNEVSA) is a signal peptide.

The protein belongs to the staphylokinase family.

Its subcellular location is the secreted. Potent plasminogen activator that converts plasminogen into plasmin. It forms a 1:1 complex with plasmin, which in turn activates other plasminogen molecules. This Staphylococcus aureus (strain MW2) protein is Staphylokinase (sak).